An 887-amino-acid polypeptide reads, in one-letter code: Translation initiation factor IF-2 (887 aa).

The tract at residues 1 to 291 is disordered; it reads MTDQADTSER…RRRVERERKK (291 aa). The span at 58-117 shows a compositional bias: low complexity; the sequence is AAPAAAPAAAPAAAEEVAKKPVAAPEVKPAAPVEERPAPVAKAAPEVKAVPAPAPAAAPA. Basic and acidic residues-rich tracts occupy residues 148–178, 185–194, 201–215, and 267–276; these read SARE…EAER, AAEEASRHTA, RAAE…DDRP, and AFDDESERQR. Positions 385–553 constitute a tr-type G domain; that stretch reads ARAPVVTVMG…TILLQAELLD (169 aa). The segment at 394-401 is G1; sequence GHVDHGKT. Residue 394–401 coordinates GTP; that stretch reads GHVDHGKT. The segment at 419 to 423 is G2; sequence GITQH. A G3 region spans residues 441 to 444; the sequence is DTPG. Residues 441 to 445 and 495 to 498 contribute to the GTP site; these read DTPGH and NKMD. A G4 region spans residues 495–498; the sequence is NKMD. A G5 region spans residues 531–533; the sequence is SAK.

Belongs to the TRAFAC class translation factor GTPase superfamily. Classic translation factor GTPase family. IF-2 subfamily.

The protein localises to the cytoplasm. Its function is as follows. One of the essential components for the initiation of protein synthesis. Protects formylmethionyl-tRNA from spontaneous hydrolysis and promotes its binding to the 30S ribosomal subunits. Also involved in the hydrolysis of GTP during the formation of the 70S ribosomal complex. The chain is Translation initiation factor IF-2 from Parvibaculum lavamentivorans (strain DS-1 / DSM 13023 / NCIMB 13966).